Here is a 430-residue protein sequence, read N- to C-terminus: Tol-Pal system protein TolB (430 aa).

An N-terminal signal peptide occupies residues 1-21; it reads MKQAFRLMVGLLVLWASVLHA.

This sequence belongs to the TolB family. The Tol-Pal system is composed of five core proteins: the inner membrane proteins TolA, TolQ and TolR, the periplasmic protein TolB and the outer membrane protein Pal. They form a network linking the inner and outer membranes and the peptidoglycan layer.

The protein resides in the periplasm. Its function is as follows. Part of the Tol-Pal system, which plays a role in outer membrane invagination during cell division and is important for maintaining outer membrane integrity. TolB occupies a key intermediary position in the Tol-Pal system because it communicates directly with both membrane-embedded components, Pal in the outer membrane and TolA in the inner membrane. The chain is Tol-Pal system protein TolB from Edwardsiella ictaluri (strain 93-146).